Here is a 190-residue protein sequence, read N- to C-terminus: dITP/XTP pyrophosphatase (190 aa).

Residue 10-15 (TTNKHK) coordinates substrate. Mg(2+) is bound by residues Glu-39 and Asp-68. The active-site Proton acceptor is Asp-68. Substrate-binding positions include Ala-69, 143–146 (FGYD), Lys-166, and 171–172 (HR).

This sequence belongs to the HAM1 NTPase family. Homodimer. It depends on Mg(2+) as a cofactor.

It catalyses the reaction XTP + H2O = XMP + diphosphate + H(+). The enzyme catalyses dITP + H2O = dIMP + diphosphate + H(+). The catalysed reaction is ITP + H2O = IMP + diphosphate + H(+). Functionally, pyrophosphatase that catalyzes the hydrolysis of nucleoside triphosphates to their monophosphate derivatives, with a high preference for the non-canonical purine nucleotides XTP (xanthosine triphosphate), dITP (deoxyinosine triphosphate) and ITP. Seems to function as a house-cleaning enzyme that removes non-canonical purine nucleotides from the nucleotide pool, thus preventing their incorporation into DNA/RNA and avoiding chromosomal lesions. The sequence is that of dITP/XTP pyrophosphatase from Hyperthermus butylicus (strain DSM 5456 / JCM 9403 / PLM1-5).